The chain runs to 232 residues: Uracil phosphoribosyltransferase (232 aa).

38–42 (KGLVK) serves as a coordination point for GTP. 5-phospho-alpha-D-ribose 1-diphosphate-binding positions include Arg-87, Arg-112, and 140–148 (DPMIATGST). Residues Ile-204 and 209 to 211 (GDA) contribute to the uracil site. Asp-210 is a 5-phospho-alpha-D-ribose 1-diphosphate binding site.

The protein belongs to the UPRTase family. Mg(2+) is required as a cofactor.

It carries out the reaction UMP + diphosphate = 5-phospho-alpha-D-ribose 1-diphosphate + uracil. Its pathway is pyrimidine metabolism; UMP biosynthesis via salvage pathway; UMP from uracil: step 1/1. Allosterically activated by GTP. Its function is as follows. Catalyzes the conversion of uracil and 5-phospho-alpha-D-ribose 1-diphosphate (PRPP) to UMP and diphosphate. This is Uracil phosphoribosyltransferase from Thermococcus sibiricus (strain DSM 12597 / MM 739).